Reading from the N-terminus, the 296-residue chain is Origin of replication complex subunit 6 (296 aa).

The interval 212 to 296 (PSKRKHDDDS…MALEVSSAAN (85 aa)) is disordered. Acidic residues predominate over residues 220–236 (DSDSSGESSGDDQDELD). Over residues 254–264 (WKSSVLSSNKQ) the composition is skewed to polar residues.

This sequence belongs to the ORC6 family. Component of the origin recognition complex (ORC) composed of at least ORC1, ORC2, ORC3, ORC4, ORC5 and ORC6. ORC is regulated in a cell-cycle and development dependent manner. It is sequentially assembled at the exit from anaphase of mitosis and disassembled as cells enter S phase.

Its subcellular location is the nucleus. Component of the origin recognition complex (ORC) that binds origins of replication. DNA-binding is ATP-dependent. The specific DNA sequences that define origins of replication have not been identified yet. ORC is required to assemble the pre-replication complex necessary to initiate DNA replication. In Oryza sativa subsp. indica (Rice), this protein is Origin of replication complex subunit 6.